Here is a 359-residue protein sequence, read N- to C-terminus: Guanine nucleotide-binding protein subunit alpha-11 (359 aa).

S-palmitoyl cysteine attachment occurs at residues Cys9 and Cys10. In terms of domain architecture, G-alpha spans 38–359; the sequence is RELKLLLLGT…QLNLKEYNLV (322 aa). A G1 motif region spans residues 41–54; that stretch reads KLLLLGTGESGKST. GTP contacts are provided by residues 46–53 and 180–183; these read GTGESGKS and LRVR. Position 53 (Ser53) interacts with Mg(2+). The G2 motif stretch occupies residues 178 to 186; the sequence is DVLRVRVPT. Thr186 contributes to the Mg(2+) binding site. Residues 201 to 210 are G3 motif; sequence FRMVDVGGQR. Positions 270-277 are G4 motif; that stretch reads ILFLNKKD. GTP-binding positions include 274–277 and Ala331; that span reads NKKD. The interval 329–334 is G5 motif; it reads TCATDT.

The protein belongs to the G-alpha family. G(q) subfamily. G proteins are composed of 3 units; alpha, beta and gamma. The alpha chain contains the guanine nucleotide binding site. Interacts with RGS22. Interacts with NTSR1.

Its subcellular location is the cell membrane. The protein localises to the cytoplasm. The catalysed reaction is GTP + H2O = GDP + phosphate + H(+). Its function is as follows. Guanine nucleotide-binding proteins (G proteins) function as transducers downstream of G protein-coupled receptors (GPCRs) in numerous signaling cascades. The alpha chain contains the guanine nucleotide binding site and alternates between an active, GTP-bound state and an inactive, GDP-bound state. Signaling by an activated GPCR promotes GDP release and GTP binding. The alpha subunit has a low GTPase activity that converts bound GTP to GDP, thereby terminating the signal. Both GDP release and GTP hydrolysis are modulated by numerous regulatory proteins. Signaling is mediated via phospholipase C-beta-dependent inositol lipid hydrolysis for signal propagation: activates phospholipase C-beta: following GPCR activation, GNA11 activates PLC-beta (PLCB1, PLCB2, PLCB3 or PLCB4), leading to production of diacylglycerol (DAG) and inositol 1,4,5-trisphosphate (IP3). Transduces FFAR4 signaling in response to long-chain fatty acids (LCFAs). Together with GNAQ, required for heart development. In the respiratory epithelium, transmits OXGR1-dependent signals that lead to downstream intracellular Ca(2+) release and mucocilliary clearance of airborne pathogens. This chain is Guanine nucleotide-binding protein subunit alpha-11 (Gna11), found in Mus musculus (Mouse).